A 584-amino-acid polypeptide reads, in one-letter code: MMMFNEMGMYGNMDFFSSSTSLDVCPLPQAEQEPVVEDVDYTDDEMDVDELEKRMWRDKMRLKRLKEQQSKCKEGVDGSKQRQSQEQARRKKMSRAQDGILKYMLKMMEVCKAQGFVYGIIPEKGKPVTGASDNLREWWKDKVRFDRNGPAAIAKYQSENNISGGSNDCNSLVGPTPHTLQELQDTTLGSLLSALMQHCDPPQRRFPLEKGVSPPWWPNGNEEWWPQLGLPNEQGPPPYKKPHDLKKAWKVGVLTAVIKHMSPDIAKIRKLVRQSKCLQDKMTAKESATWLAIINQEEVVARELYPESCPPLSSSSSLGSGSLLINDCSEYDVEGFEKEQHGFDVEERKPEIVMMHPLASFGVAKMQHFPIKEEVATTVNLEFTRKRKQNNDMNVMVMDRSAGYTCENGQCPHSKMNLGFQDRSSRDNHQMVCPYRDNRLAYGASKFHMGGMKLVVPQQPVQPIDLSGVGVPENGQKMITELMAMYDRNVQSNQTPPTLMENQSMVIDAKAAQNQQLNFNSGNQMFMQQGTNNGVNNRFQMVFDSTPFDMAAFDYRDDWQTGAMEGMGKQQQQQQQQQDVSIWF.

Residues 41 to 74 adopt a coiled-coil conformation; that stretch reads YTDDEMDVDELEKRMWRDKMRLKRLKEQQSKCKE. The segment covering 67–80 has biased composition (basic and acidic residues); that stretch reads EQQSKCKEGVDGSK. Disordered regions lie at residues 67–93 and 565–584; these read EQQS…RKKM and EGMG…SIWF.

This sequence belongs to the EIN3 family. Acts as a homodimer to bind the primary ethylene response element.

The protein localises to the nucleus. Probable transcription factor acting as a positive regulator in the ethylene response pathway. Could bind the primary ethylene response element present in the ETHYLENE-RESPONSE-FACTOR1 promoter. The sequence is that of ETHYLENE INSENSITIVE 3-like 1 protein (EIL1) from Arabidopsis thaliana (Mouse-ear cress).